Consider the following 322-residue polypeptide: Protein-methionine-sulfoxide reductase catalytic subunit MsrP (322 aa).

A signal peptide (tat-type signal) is located at residues 1–59; it reads MSFRDALNLPSSEITDESVYRDRRRLLQLLALTPALGVAGCAEADPPPPPKTVVTPAQA. Mo-molybdopterin contacts are provided by residues Asn79, 82–83, Cys137, Thr172, Asn220, Arg225, and 236–238; these read YE and SIK.

The protein belongs to the MsrP family. Heterodimer of a catalytic subunit (MsrP) and a heme-binding subunit (MsrQ). The cofactor is Mo-molybdopterin. In terms of processing, predicted to be exported by the Tat system. The position of the signal peptide cleavage has not been experimentally proven.

The protein resides in the periplasm. It catalyses the reaction L-methionyl-[protein] + a quinone + H2O = L-methionyl-(S)-S-oxide-[protein] + a quinol. The catalysed reaction is L-methionyl-[protein] + a quinone + H2O = L-methionyl-(R)-S-oxide-[protein] + a quinol. Its function is as follows. Part of the MsrPQ system that repairs oxidized periplasmic proteins containing methionine sulfoxide residues (Met-O), using respiratory chain electrons. Thus protects these proteins from oxidative-stress damage caused by reactive species of oxygen and chlorine generated by the host defense mechanisms. MsrPQ is essential for the maintenance of envelope integrity under bleach stress, rescuing a wide series of structurally unrelated periplasmic proteins from methionine oxidation. The catalytic subunit MsrP is non-stereospecific, being able to reduce both (R-) and (S-) diastereoisomers of methionine sulfoxide. The sequence is that of Protein-methionine-sulfoxide reductase catalytic subunit MsrP from Xanthomonas axonopodis pv. citri (strain 306).